A 203-amino-acid polypeptide reads, in one-letter code: NADH-quinone oxidoreductase subunit C (203 aa).

This sequence belongs to the complex I 30 kDa subunit family. NDH-1 is composed of 14 different subunits. Subunits NuoB, C, D, E, F, and G constitute the peripheral sector of the complex.

Its subcellular location is the cell inner membrane. The enzyme catalyses a quinone + NADH + 5 H(+)(in) = a quinol + NAD(+) + 4 H(+)(out). Functionally, NDH-1 shuttles electrons from NADH, via FMN and iron-sulfur (Fe-S) centers, to quinones in the respiratory chain. The immediate electron acceptor for the enzyme in this species is believed to be ubiquinone. Couples the redox reaction to proton translocation (for every two electrons transferred, four hydrogen ions are translocated across the cytoplasmic membrane), and thus conserves the redox energy in a proton gradient. The protein is NADH-quinone oxidoreductase subunit C of Delftia acidovorans (strain DSM 14801 / SPH-1).